The chain runs to 160 residues: Secreted RxLR effector protein 83 (160 aa).

A signal peptide spans 1–21; that stretch reads MLVLLAATFFIYISRLTSTDA. The RxLR motif lies at 27-30; sequence RGLR. 2 N-linked (GlcNAc...) asparagine glycosylation sites follow: Asn-39 and Asn-131.

This sequence belongs to the RxLR effector family.

It localises to the secreted. The protein resides in the host nucleus. It is found in the host cytoplasm. In terms of biological role, secreted effector that completely suppresses the host cell death induced by cell death-inducing proteins. This chain is Secreted RxLR effector protein 83, found in Plasmopara viticola (Downy mildew of grapevine).